The sequence spans 133 residues: Protein PsiE homolog (133 aa).

4 helical membrane-spanning segments follow: residues 13–33 (LQWI…IFLI), 55–75 (VESI…IKYF), 81–101 (FPLR…IIVS), and 105–125 (PMET…LYIS).

This sequence belongs to the PsiE family.

It is found in the cell membrane. The chain is Protein PsiE homolog from Bacillus cereus (strain ATCC 10987 / NRS 248).